The primary structure comprises 361 residues: Prostaglandin D2 receptor (361 aa).

Over 1–21 the chain is Extracellular; the sequence is MRPLFYRCHNTTSVEKGNSAT. Residue Asn10 is glycosylated (N-linked (GlcNAc...) asparagine). A helical membrane pass occupies residues 22 to 42; sequence MGGVLFSTGLVGNLLALGLLA. Over 43–58 the chain is Cytoplasmic; sequence RSGLGSCPPRSPRPPP. Residues 59–79 traverse the membrane as a helical segment; the sequence is SVFYVLVFGLTITDLLGKCLV. Topologically, residues 80 to 107 are extracellular; the sequence is SPFVLSAYAQNRSLRELVPGSDSSLCQA. Asn90 is a glycosylation site (N-linked (GlcNAc...) asparagine). An intrachain disulfide couples Cys105 to Cys183. A helical membrane pass occupies residues 108–128; sequence FAFIMSFFGLASTLQLLAMAL. Residues 129–150 lie on the Cytoplasmic side of the membrane; the sequence is ECWLSLGHPFFHRRHLTPRRGA. Residues 151–171 traverse the membrane as a helical segment; that stretch reads MVAPVVGAFCLAFCALPLVGF. Residues 172–195 are Extracellular-facing; that stretch reads GKFVQYCPGTWCFFQMVHEERSLS. Residues 196-216 traverse the membrane as a helical segment; it reads VLSYSVLYASLMLLLVLAIVL. Topologically, residues 217 to 262 are cytoplasmic; sequence CNLSAMRNLYAMHLRLRGLLRPGSRERAEPGAGEREATPLHLEELD. A helical transmembrane segment spans residues 263–283; sequence HLLLLALMTVLFTMCSLPLIY. The Extracellular segment spans residues 284 to 310; sequence RAYYGAFKAVPEQNGTTEETEDLRALR. N-linked (GlcNAc...) asparagine glycosylation is present at Asn297. The chain crosses the membrane as a helical span at residues 311–331; it reads FLSVISIVDPWIFIIFRTSVF. Topologically, residues 332–361 are cytoplasmic; it reads RMFFRKIFIRPLIYRNWHSNSCQTNMESSL.

The protein belongs to the G-protein coupled receptor 1 family.

It localises to the cell membrane. Functionally, receptor for prostaglandin D2 (PGD2). The activity of this receptor is mainly mediated by G(s) proteins that stimulate adenylate cyclase, resulting in an elevation of intracellular cAMP. A mobilization of calcium is also observed, but without formation of inositol 1,4,5-trisphosphate. Involved in PLA2G3-dependent maturation of mast cells. PLA2G3 is secreted by immature mast cells and acts on nearby fibroblasts upstream to PTDGS to synthesize PGD2, which in turn promotes mast cell maturation and degranulation via PTGDR. This is Prostaglandin D2 receptor (PTGDR) from Bos taurus (Bovine).